Reading from the N-terminus, the 126-residue chain is Holo-[acyl-carrier-protein] synthase (126 aa).

Positions 9 and 57 each coordinate Mg(2+).

The protein belongs to the P-Pant transferase superfamily. AcpS family. Mg(2+) serves as cofactor.

Its subcellular location is the cytoplasm. The enzyme catalyses apo-[ACP] + CoA = holo-[ACP] + adenosine 3',5'-bisphosphate + H(+). Transfers the 4'-phosphopantetheine moiety from coenzyme A to a Ser of acyl-carrier-protein. In Alteromonas mediterranea (strain DSM 17117 / CIP 110805 / LMG 28347 / Deep ecotype), this protein is Holo-[acyl-carrier-protein] synthase.